The sequence spans 219 residues: Thiamine-phosphate synthase (219 aa).

Residues 44–48 and N79 contribute to the 4-amino-2-methyl-5-(diphosphooxymethyl)pyrimidine site; that span reads QFREK. Residues D80 and D99 each contribute to the Mg(2+) site. S117 serves as a coordination point for 4-amino-2-methyl-5-(diphosphooxymethyl)pyrimidine. 143–145 contacts 2-[(2R,5Z)-2-carboxy-4-methylthiazol-5(2H)-ylidene]ethyl phosphate; it reads TST. K146 serves as a coordination point for 4-amino-2-methyl-5-(diphosphooxymethyl)pyrimidine. 2-[(2R,5Z)-2-carboxy-4-methylthiazol-5(2H)-ylidene]ethyl phosphate-binding positions include G175 and 195–196; that span reads IS.

This sequence belongs to the thiamine-phosphate synthase family. Mg(2+) serves as cofactor.

The enzyme catalyses 2-[(2R,5Z)-2-carboxy-4-methylthiazol-5(2H)-ylidene]ethyl phosphate + 4-amino-2-methyl-5-(diphosphooxymethyl)pyrimidine + 2 H(+) = thiamine phosphate + CO2 + diphosphate. It catalyses the reaction 2-(2-carboxy-4-methylthiazol-5-yl)ethyl phosphate + 4-amino-2-methyl-5-(diphosphooxymethyl)pyrimidine + 2 H(+) = thiamine phosphate + CO2 + diphosphate. It carries out the reaction 4-methyl-5-(2-phosphooxyethyl)-thiazole + 4-amino-2-methyl-5-(diphosphooxymethyl)pyrimidine + H(+) = thiamine phosphate + diphosphate. The protein operates within cofactor biosynthesis; thiamine diphosphate biosynthesis; thiamine phosphate from 4-amino-2-methyl-5-diphosphomethylpyrimidine and 4-methyl-5-(2-phosphoethyl)-thiazole: step 1/1. Its function is as follows. Condenses 4-methyl-5-(beta-hydroxyethyl)thiazole monophosphate (THZ-P) and 2-methyl-4-amino-5-hydroxymethyl pyrimidine pyrophosphate (HMP-PP) to form thiamine monophosphate (TMP). The polypeptide is Thiamine-phosphate synthase (Bacillus cereus (strain B4264)).